The primary structure comprises 396 residues: GDSL esterase/lipase ACHE (396 aa).

Residues 1–31 (MATAATATAGSRAAVLLLLSLALALALRPSD) form the signal peptide. The active-site Nucleophile is Ser-49. N-linked (GlcNAc...) asparagine glycosylation is found at Asn-108, Asn-126, Asn-151, Asn-196, and Asn-339. Active-site residues include Asp-359 and His-362.

The protein belongs to the 'GDSL' lipolytic enzyme family.

It localises to the secreted. In terms of biological role, esterase that can hydrolyze acetylthiocholine and propionylthiocholine in vitro. Substrate preference is propionylthiocholine &gt; acetylthiocholine. Possesses extremely low activity against butyrylthiocholine. This chain is GDSL esterase/lipase ACHE, found in Zea mays (Maize).